The primary structure comprises 366 residues: Histidinol-phosphate aminotransferase (366 aa).

At Lys-227 the chain carries N6-(pyridoxal phosphate)lysine.

This sequence belongs to the class-II pyridoxal-phosphate-dependent aminotransferase family. Histidinol-phosphate aminotransferase subfamily. In terms of assembly, homodimer. Pyridoxal 5'-phosphate serves as cofactor.

It carries out the reaction L-histidinol phosphate + 2-oxoglutarate = 3-(imidazol-4-yl)-2-oxopropyl phosphate + L-glutamate. Its pathway is amino-acid biosynthesis; L-histidine biosynthesis; L-histidine from 5-phospho-alpha-D-ribose 1-diphosphate: step 7/9. The chain is Histidinol-phosphate aminotransferase from Campylobacter hominis (strain ATCC BAA-381 / DSM 21671 / CCUG 45161 / LMG 19568 / NCTC 13146 / CH001A).